The sequence spans 272 residues: Secretagogin (272 aa).

EF-hand domains lie at Leu8–Lys43, Glu53–Asn89, Asp101–Gln136, Lys145–Phe180, Glu193–Leu228, and Asp237–Pro272. Asp21, Asp23, Asn25, Tyr27, and Glu32 together coordinate Ca(2+). Ca(2+)-binding residues include Asp114, Asp116, Ser118, Tyr120, Glu125, Asp158, Asn160, Asp162, Arg164, Asp169, Asp206, Ser208, Thr210, Glu217, Asp250, Asn252, Asp254, Lys256, and Glu261.

It localises to the cytoplasm. The chain is Secretagogin (scgn) from Danio rerio (Zebrafish).